Reading from the N-terminus, the 124-residue chain is uncharacterized protein (124 aa).

This sequence belongs to the YciI family.

This is an uncharacterized protein from Rhizobium meliloti (strain 1021) (Ensifer meliloti).